The sequence spans 341 residues: Aspartate carbamoyltransferase catalytic subunit (341 aa).

Carbamoyl phosphate contacts are provided by Arg-89 and Thr-90. Residue Lys-117 coordinates L-aspartate. 3 residues coordinate carbamoyl phosphate: Arg-139, His-169, and Gln-172. The L-aspartate site is built by Arg-202 and Arg-257. Positions 298 and 299 each coordinate carbamoyl phosphate.

This sequence belongs to the aspartate/ornithine carbamoyltransferase superfamily. ATCase family. Heterododecamer (2C3:3R2) of six catalytic PyrB chains organized as two trimers (C3), and six regulatory PyrI chains organized as three dimers (R2).

The enzyme catalyses carbamoyl phosphate + L-aspartate = N-carbamoyl-L-aspartate + phosphate + H(+). It functions in the pathway pyrimidine metabolism; UMP biosynthesis via de novo pathway; (S)-dihydroorotate from bicarbonate: step 2/3. Its function is as follows. Catalyzes the condensation of carbamoyl phosphate and aspartate to form carbamoyl aspartate and inorganic phosphate, the committed step in the de novo pyrimidine nucleotide biosynthesis pathway. In Paraburkholderia xenovorans (strain LB400), this protein is Aspartate carbamoyltransferase catalytic subunit.